The chain runs to 500 residues: Kynurenine 3-monooxygenase (500 aa).

It belongs to the aromatic-ring hydroxylase family. KMO subfamily. FAD is required as a cofactor.

It is found in the mitochondrion outer membrane. The catalysed reaction is L-kynurenine + NADPH + O2 + H(+) = 3-hydroxy-L-kynurenine + NADP(+) + H2O. Its pathway is cofactor biosynthesis; NAD(+) biosynthesis; quinolinate from L-kynurenine: step 1/3. In terms of biological role, catalyzes the hydroxylation of L-kynurenine (L-Kyn) to form 3-hydroxy-L-kynurenine (L-3OHKyn). Required for synthesis of quinolinic acid. This chain is Kynurenine 3-monooxygenase (bna4), found in Aspergillus terreus (strain NIH 2624 / FGSC A1156).